We begin with the raw amino-acid sequence, 127 residues long: MGLQNMTLRRFTLSMSALLLLCALLWLWAALEQQESSLAIRPVTPNTSMPDGFSIWHHLDANGIRFKSITPQDDALVIKFESSEQSAAAKEVLDRSLPHGYVIALQEDDAIAPQWLSRLRDAPHRLG.

Residues 1 to 10 (MGLQNMTLRR) are Cytoplasmic-facing. A helical transmembrane segment spans residues 11 to 31 (FTLSMSALLLLCALLWLWAAL). Topologically, residues 32–127 (EQQESSLAIR…RLRDAPHRLG (96 aa)) are periplasmic.

It belongs to the MzrA family. As to quaternary structure, interacts with EnvZ.

Its subcellular location is the cell inner membrane. Modulates the activity of the EnvZ/OmpR two-component regulatory system, probably by directly modulating EnvZ enzymatic activity and increasing stability of phosphorylated OmpR. The protein is Modulator protein MzrA of Enterobacter lignolyticus (strain SCF1).